The chain runs to 519 residues: Tachykinin-like peptides receptor 99D (519 aa).

The Extracellular segment spans residues 1-100; the sequence is MENRSDFEAD…SFAFVVPWWR (100 aa). N-linked (GlcNAc...) asparagine glycosylation is found at Asn3, Asn19, Asn22, and Asn61. Residues 101 to 123 form a helical membrane-spanning segment; sequence QVLWSILFGGMVIVATGGNLIVV. Over 124–134 the chain is Cytoplasmic; that stretch reads WIVMTTKRMRT. Residues 135–155 form a helical membrane-spanning segment; the sequence is VTNYFIVNLSIADAMVSSLNV. At 156-175 the chain is on the extracellular side; that stretch reads TFNYYYMLDSDWPFGEFYCK. A disulfide bond links Cys174 and Cys254. The helical transmembrane segment at 176–197 threads the bilayer; sequence LSQFIAMLSICASVFTLMAISI. Residues 198 to 217 are Cytoplasmic-facing; it reads DRYVAIIRPLQPRMSKRCNL. Residues 218 to 238 form a helical membrane-spanning segment; the sequence is AIAAVIWLASTLISCPMMIIY. The Extracellular portion of the chain corresponds to 239 to 270; that stretch reads RTEEVPVRGLSNRTVCYPEWPDGPTNHSTMES. A helical membrane pass occupies residues 271–292; it reads LYNILIIILTYFLPIVSMTVTY. The Cytoplasmic portion of the chain corresponds to 293 to 324; sequence SRVGIELWGSKTIGECTPRQVENVRSKRRVVK. A helical transmembrane segment spans residues 325 to 346; the sequence is MMIVVVLIFAICWLPFHSYFII. Topologically, residues 347–361 are extracellular; the sequence is TSCYPAITEAPFIQE. Residues 362 to 384 traverse the membrane as a helical segment; it reads LYLAIYWLAMSNSMYNPIIYCWM. The Cytoplasmic segment spans residues 385 to 519; that stretch reads NSRFRYGFKM…STANTTQLLS (135 aa). Cys399 carries S-palmitoyl cysteine lipidation. The disordered stretch occupies residues 444–519; sequence PSSPKSHRIS…STANTTQLLS (76 aa). Composition is skewed to polar residues over residues 454–465 and 487–499; these read HSGTGRSATLRN and SYQQ…WSGP. Residues 500–519 show a composition bias toward low complexity; sequence NSATAVTNSSSTANTTQLLS.

The protein belongs to the G-protein coupled receptor 1 family. As to expression, during late embryogenesis (stages 11-15), expressed in the brain and in a specific subset of neurons in each neuromere of the developing ventral ganglion. Expressed in the cortex of the adult brain, which contains the neuronal cell bodies.

It localises to the cell membrane. Functionally, receptor for tachykinin-like peptides. The polypeptide is Tachykinin-like peptides receptor 99D (TkR99D) (Drosophila melanogaster (Fruit fly)).